Consider the following 86-residue polypeptide: UPF0180 protein CA_C1486 (86 aa).

The protein belongs to the UPF0180 family.

This is UPF0180 protein CA_C1486 from Clostridium acetobutylicum (strain ATCC 824 / DSM 792 / JCM 1419 / IAM 19013 / LMG 5710 / NBRC 13948 / NRRL B-527 / VKM B-1787 / 2291 / W).